A 421-amino-acid polypeptide reads, in one-letter code: Histidine--tRNA ligase (421 aa).

Belongs to the class-II aminoacyl-tRNA synthetase family. In terms of assembly, homodimer.

It localises to the cytoplasm. The catalysed reaction is tRNA(His) + L-histidine + ATP = L-histidyl-tRNA(His) + AMP + diphosphate + H(+). This chain is Histidine--tRNA ligase, found in Ureaplasma urealyticum serovar 10 (strain ATCC 33699 / Western).